Reading from the N-terminus, the 347-residue chain is N-acetyl-gamma-glutamyl-phosphate reductase (347 aa).

The active site involves Cys-152.

It belongs to the NAGSA dehydrogenase family. Type 1 subfamily.

Its subcellular location is the cytoplasm. It carries out the reaction N-acetyl-L-glutamate 5-semialdehyde + phosphate + NADP(+) = N-acetyl-L-glutamyl 5-phosphate + NADPH + H(+). It participates in amino-acid biosynthesis; L-arginine biosynthesis; N(2)-acetyl-L-ornithine from L-glutamate: step 3/4. Functionally, catalyzes the NADPH-dependent reduction of N-acetyl-5-glutamyl phosphate to yield N-acetyl-L-glutamate 5-semialdehyde. This is N-acetyl-gamma-glutamyl-phosphate reductase from Neisseria gonorrhoeae (strain ATCC 700825 / FA 1090).